The chain runs to 299 residues: MLSRHINYFLAVAEHGSFTRAASALHVSQPALSQQIRQLEESLGVPLFDRSGRTIRLTDAGEVWRQYASRALQELGAGKRAIHDVADLTRGSLRIAVTPTFTSYFIGPLMADFYARYPSITLQLQEMSQEKIEDMLCRDELDVGIAFAPVHSPELEAIPLLTESLALVVAQHHPLAVHEQVALSRLHDEKLVLLSAEFATREQIDHYCEKAGLHPQVVIEANSISAVLELIRRTSLSTLLPAAIATQHDGLKAISLAPPLLERTAVLLRRKNSWQTAAAKAFLHMALDKCAVVGGNESR.

Residues 1 to 58 (MLSRHINYFLAVAEHGSFTRAASALHVSQPALSQQIRQLEESLGVPLFDRSGRTIRLT) form the HTH lysR-type domain. The H-T-H motif DNA-binding region spans 18–37 (FTRAASALHVSQPALSQQIR).

The protein belongs to the LysR transcriptional regulatory family.

It is found in the cytoplasm. Functionally, positively regulates the cynTSX operon, and negatively regulates its own transcription. Binds specifically to the cynR-cynTSX intergenic region. In Escherichia coli (strain K12), this protein is HTH-type transcriptional regulator CynR (cynR).